A 245-amino-acid chain; its full sequence is Orotidine 5'-phosphate decarboxylase (245 aa).

Substrate is bound by residues Asp-22, Lys-44, 71 to 80 (DLKFHDIPNT), Thr-131, Arg-192, Gln-201, Gly-221, and Arg-222. The Proton donor role is filled by Lys-73.

Belongs to the OMP decarboxylase family. Type 1 subfamily. As to quaternary structure, homodimer.

The enzyme catalyses orotidine 5'-phosphate + H(+) = UMP + CO2. It functions in the pathway pyrimidine metabolism; UMP biosynthesis via de novo pathway; UMP from orotate: step 2/2. Functionally, catalyzes the decarboxylation of orotidine 5'-monophosphate (OMP) to uridine 5'-monophosphate (UMP). This is Orotidine 5'-phosphate decarboxylase from Shigella flexneri serotype 5b (strain 8401).